The chain runs to 567 residues: Allo-aromadendrene synthase TPS4FN (567 aa).

(2E,6E)-farnesyl diphosphate contacts are provided by Arg282, Asp319, Asp323, Arg462, and Asp465. 2 residues coordinate Mg(2+): Asp319 and Asp323. The DDXXD motif signature appears at 319–323; that stretch reads DDIYD. 2 residues coordinate Mg(2+): Asp465 and Glu473.

It belongs to the terpene synthase family. Tpsb subfamily. Mg(2+) serves as cofactor. Requires Mn(2+) as cofactor.

The enzyme catalyses (2E,6E)-farnesyl diphosphate = alpha-humulene + diphosphate. It catalyses the reaction (2E,6E)-farnesyl diphosphate = (+)-valencene + diphosphate. It carries out the reaction (2E)-geranyl diphosphate = beta-myrcene + diphosphate. The catalysed reaction is (2E,6E)-farnesyl diphosphate = allo-aromadendrene + diphosphate. The enzyme catalyses (2E,6E)-farnesyl diphosphate + H2O = palustrol + diphosphate. It participates in secondary metabolite biosynthesis; terpenoid biosynthesis. In terms of biological role, involved in sesquiterpene olefins biosynthesis, constituants of cannabinoids and terpenoids-rich resins. Catalyzes mainly the conversion of (2E)-farnesyl diphosphate to allo-aromadendrene, and also produces minor products such as alpha-humulene, valencene and palustrol. Can also use (2E)-geranyl diphosphate as substrate with low efficiency, producing minor amounts of myrcene. The protein is Allo-aromadendrene synthase TPS4FN of Cannabis sativa (Hemp).